The following is a 238-amino-acid chain: 1-(5-phosphoribosyl)-5-[(5-phosphoribosylamino)methylideneamino] imidazole-4-carboxamide isomerase (238 aa).

D8 serves as the catalytic Proton acceptor. D129 (proton donor) is an active-site residue.

Belongs to the HisA/HisF family.

It localises to the cytoplasm. The enzyme catalyses 1-(5-phospho-beta-D-ribosyl)-5-[(5-phospho-beta-D-ribosylamino)methylideneamino]imidazole-4-carboxamide = 5-[(5-phospho-1-deoxy-D-ribulos-1-ylimino)methylamino]-1-(5-phospho-beta-D-ribosyl)imidazole-4-carboxamide. The protein operates within amino-acid biosynthesis; L-histidine biosynthesis; L-histidine from 5-phospho-alpha-D-ribose 1-diphosphate: step 4/9. This Paracoccus denitrificans (strain Pd 1222) protein is 1-(5-phosphoribosyl)-5-[(5-phosphoribosylamino)methylideneamino] imidazole-4-carboxamide isomerase.